We begin with the raw amino-acid sequence, 451 residues long: uncharacterized protein (451 aa).

The TRAM domain occupies 1-59 (MLKKNDIVEVEISDLSHDGAGIAKVDGLVFFVDNALPTEKIRMRVLKVKKNIAFGKVES). Q283, Y312, E333, and D381 together coordinate S-adenosyl-L-methionine. C408 functions as the Nucleophile in the catalytic mechanism.

This sequence belongs to the class I-like SAM-binding methyltransferase superfamily. RNA M5U methyltransferase family.

This is an uncharacterized protein from Streptococcus mutans serotype c (strain ATCC 700610 / UA159).